A 151-amino-acid chain; its full sequence is Small heat shock protein HspH (151 aa).

The sHSP domain occupies 28 to 138 (RAGEDNYPPY…KPRRIAINAA (111 aa)).

It belongs to the small heat shock protein (HSP20) family.

This chain is Small heat shock protein HspH (hspH), found in Bradyrhizobium diazoefficiens (strain JCM 10833 / BCRC 13528 / IAM 13628 / NBRC 14792 / USDA 110).